The sequence spans 412 residues: Serine hydroxymethyltransferase (412 aa).

(6S)-5,6,7,8-tetrahydrofolate contacts are provided by residues Leu117 and 121-123 (GHL). Lys226 is subject to N6-(pyridoxal phosphate)lysine. A (6S)-5,6,7,8-tetrahydrofolate-binding site is contributed by 349-351 (SPF).

Belongs to the SHMT family. In terms of assembly, homodimer. The cofactor is pyridoxal 5'-phosphate.

It localises to the cytoplasm. The enzyme catalyses (6R)-5,10-methylene-5,6,7,8-tetrahydrofolate + glycine + H2O = (6S)-5,6,7,8-tetrahydrofolate + L-serine. It participates in one-carbon metabolism; tetrahydrofolate interconversion. Its pathway is amino-acid biosynthesis; glycine biosynthesis; glycine from L-serine: step 1/1. In terms of biological role, catalyzes the reversible interconversion of serine and glycine with tetrahydrofolate (THF) serving as the one-carbon carrier. This reaction serves as the major source of one-carbon groups required for the biosynthesis of purines, thymidylate, methionine, and other important biomolecules. Also exhibits THF-independent aldolase activity toward beta-hydroxyamino acids, producing glycine and aldehydes, via a retro-aldol mechanism. The chain is Serine hydroxymethyltransferase from Halothermothrix orenii (strain H 168 / OCM 544 / DSM 9562).